The chain runs to 133 residues: Small ribosomal subunit protein uS11 (133 aa).

Belongs to the universal ribosomal protein uS11 family. Part of the 30S ribosomal subunit. Interacts with proteins S7 and S18. Binds to IF-3.

Functionally, located on the platform of the 30S subunit, it bridges several disparate RNA helices of the 16S rRNA. Forms part of the Shine-Dalgarno cleft in the 70S ribosome. This Christiangramia forsetii (strain DSM 17595 / CGMCC 1.15422 / KT0803) (Gramella forsetii) protein is Small ribosomal subunit protein uS11.